A 594-amino-acid polypeptide reads, in one-letter code: DNA ligase 2 (594 aa).

E250 lines the ATP pocket. The N6-AMP-lysine intermediate role is filled by K252. ATP contacts are provided by R257, R273, E303, F343, R419, and K425.

The protein belongs to the ATP-dependent DNA ligase family. The cofactor is Mg(2+).

It carries out the reaction ATP + (deoxyribonucleotide)n-3'-hydroxyl + 5'-phospho-(deoxyribonucleotide)m = (deoxyribonucleotide)n+m + AMP + diphosphate.. Its function is as follows. DNA ligase that seals nicks in double-stranded DNA during DNA replication, DNA recombination and DNA repair. The polypeptide is DNA ligase 2 (Korarchaeum cryptofilum (strain OPF8)).